We begin with the raw amino-acid sequence, 378 residues long: Probable dihydroorotase-like protein (378 aa).

It belongs to the metallo-dependent hydrolases superfamily. DHOase family. PyrC' subfamily.

Its function is as follows. Non-functional DHOase. The protein is Probable dihydroorotase-like protein (pyrC') of Helicobacter pylori (strain J99 / ATCC 700824) (Campylobacter pylori J99).